Reading from the N-terminus, the 371-residue chain is tRNA-specific 2-thiouridylase MnmA (371 aa).

Residues 11–18 and methionine 37 contribute to the ATP site; that span reads GMSGGVDS. Residues 97-99 are interaction with target base in tRNA; that stretch reads NPD. The Nucleophile role is filled by cysteine 102. Residues cysteine 102 and cysteine 199 are joined by a disulfide bond. An ATP-binding site is contributed by glycine 127. The segment at 149 to 151 is interaction with tRNA; the sequence is KDQ. Cysteine 199 serves as the catalytic Cysteine persulfide intermediate. The interval 311 to 312 is interaction with tRNA; it reads RY.

It belongs to the MnmA/TRMU family.

It localises to the cytoplasm. The catalysed reaction is S-sulfanyl-L-cysteinyl-[protein] + uridine(34) in tRNA + AH2 + ATP = 2-thiouridine(34) in tRNA + L-cysteinyl-[protein] + A + AMP + diphosphate + H(+). Its function is as follows. Catalyzes the 2-thiolation of uridine at the wobble position (U34) of tRNA, leading to the formation of s(2)U34. The sequence is that of tRNA-specific 2-thiouridylase MnmA from Idiomarina loihiensis (strain ATCC BAA-735 / DSM 15497 / L2-TR).